We begin with the raw amino-acid sequence, 407 residues long: 8-amino-7-oxononanoate synthase (407 aa).

Arg-24 contacts substrate. 111 to 112 (GF) is a binding site for pyridoxal 5'-phosphate. Residue His-137 participates in substrate binding. Residues Ser-183, His-211, and Thr-239 each contribute to the pyridoxal 5'-phosphate site. N6-(pyridoxal phosphate)lysine is present on Lys-242. Thr-356 contributes to the substrate binding site.

Belongs to the class-II pyridoxal-phosphate-dependent aminotransferase family. BioF subfamily. As to quaternary structure, homodimer. It depends on pyridoxal 5'-phosphate as a cofactor.

The enzyme catalyses 6-carboxyhexanoyl-[ACP] + L-alanine + H(+) = (8S)-8-amino-7-oxononanoate + holo-[ACP] + CO2. It participates in cofactor biosynthesis; biotin biosynthesis. Functionally, catalyzes the decarboxylative condensation of pimeloyl-[acyl-carrier protein] and L-alanine to produce 8-amino-7-oxononanoate (AON), [acyl-carrier protein], and carbon dioxide. The chain is 8-amino-7-oxononanoate synthase from Stenotrophomonas maltophilia (strain R551-3).